Here is a 185-residue protein sequence, read N- to C-terminus: UPF0669 protein C6orf120 homolog (185 aa).

Positions Met-1 to Thr-23 are cleaved as a signal peptide. N-linked (GlcNAc...) asparagine glycosylation is present at Asn-47.

It belongs to the UPF0669 family.

The protein resides in the secreted. The protein is UPF0669 protein C6orf120 homolog of Gallus gallus (Chicken).